The chain runs to 208 residues: FMN-dependent NADH:quinone oxidoreductase 1 (208 aa).

This sequence belongs to the azoreductase type 1 family. Homodimer. FMN is required as a cofactor.

It carries out the reaction 2 a quinone + NADH + H(+) = 2 a 1,4-benzosemiquinone + NAD(+). The enzyme catalyses N,N-dimethyl-1,4-phenylenediamine + anthranilate + 2 NAD(+) = 2-(4-dimethylaminophenyl)diazenylbenzoate + 2 NADH + 2 H(+). Its function is as follows. Quinone reductase that provides resistance to thiol-specific stress caused by electrophilic quinones. Also exhibits azoreductase activity. Catalyzes the reductive cleavage of the azo bond in aromatic azo compounds to the corresponding amines. This Bacillus licheniformis (strain ATCC 14580 / DSM 13 / JCM 2505 / CCUG 7422 / NBRC 12200 / NCIMB 9375 / NCTC 10341 / NRRL NRS-1264 / Gibson 46) protein is FMN-dependent NADH:quinone oxidoreductase 1.